The chain runs to 42 residues: Photosystem I reaction center subunit IX (42 aa).

Residues 7 to 27 (YLSTAPVLATLWFGFLAGLLI) traverse the membrane as a helical segment.

It belongs to the PsaJ family.

It is found in the plastid. It localises to the chloroplast thylakoid membrane. Functionally, may help in the organization of the PsaE and PsaF subunits. The sequence is that of Photosystem I reaction center subunit IX from Anthoceros angustus (Hornwort).